Here is a 245-residue protein sequence, read N- to C-terminus: Probable 2-phosphosulfolactate phosphatase (245 aa).

It belongs to the ComB family. Requires Mg(2+) as cofactor.

It carries out the reaction (2R)-O-phospho-3-sulfolactate + H2O = (2R)-3-sulfolactate + phosphate. In Trichormus variabilis (strain ATCC 29413 / PCC 7937) (Anabaena variabilis), this protein is Probable 2-phosphosulfolactate phosphatase.